A 128-amino-acid chain; its full sequence is MGISKALRSLLILLLLNITFFFGHVTPGATVKPCPPPPAKQATTKCPRDTLKFGVCGSWLGLVSEVIGTPPSQECCSLIKGLADFEAAVCLCTALKTSILGVAPVKIPVALTLLLNSCGKNVPQGFVC.

Positions 1-23 (MGISKALRSLLILLLLNITFFFG) are cleaved as a signal peptide. 4 disulfide bridges follow: Cys34–Cys90, Cys46–Cys76, Cys56–Cys75, and Cys92–Cys128.

The protein belongs to the plant LTP family. PEARLI1 subfamily.

It is found in the secreted. The protein is Putative lipid-binding protein At4g00165 of Arabidopsis thaliana (Mouse-ear cress).